Here is a 169-residue protein sequence, read N- to C-terminus: Peptide methionine sulfoxide reductase MsrA (169 aa).

The active site involves cysteine 13.

This sequence belongs to the MsrA Met sulfoxide reductase family.

The enzyme catalyses L-methionyl-[protein] + [thioredoxin]-disulfide + H2O = L-methionyl-(S)-S-oxide-[protein] + [thioredoxin]-dithiol. It catalyses the reaction [thioredoxin]-disulfide + L-methionine + H2O = L-methionine (S)-S-oxide + [thioredoxin]-dithiol. Its function is as follows. Has an important function as a repair enzyme for proteins that have been inactivated by oxidation. Catalyzes the reversible oxidation-reduction of methionine sulfoxide in proteins to methionine. This is Peptide methionine sulfoxide reductase MsrA from Mycolicibacterium vanbaalenii (strain DSM 7251 / JCM 13017 / BCRC 16820 / KCTC 9966 / NRRL B-24157 / PYR-1) (Mycobacterium vanbaalenii).